The following is a 1529-amino-acid chain: Slit homolog 2 protein (1529 aa).

An N-terminal signal peptide occupies residues 1–30 (MRGVGWQMLSLSLGLVLAILNKVAPQACPA). Positions 31–55 (QCSCSGSTVDCHGLALRSVPRNIPR) constitute an LRRNT domain. LRR repeat units follow at residues 56–77 (NTERLDLNGNNITRITKTDFAG), 80–101 (HLRVLQLMENKISTIERGAFQD), 104–125 (ELERLRLNRNHLQLFPELLFLG), 128–149 (KLYRLDLSENQIQAIPRKAFRG), 152–173 (DIKNLQLDYNQISCIEDGAFRA), and 176–197 (DLEVLTLNNNNITRLSVASFNH). Residue Asn-66 is glycosylated (N-linked (GlcNAc...) asparagine). The N-linked (GlcNAc...) asparagine glycan is linked to Asn-186. An LRRCT 1 domain is found at 209–259 (NNLYCDCHLAWLSDWLRQRPRVGLYTQCMGPSHLRGHNVAEVQKREFVCSG). Residues 264–300 (MAPSCSVLHCPAACTCSNNIVDCRGKGLTEIPTNLPE) form the LRRNT 2 domain. Cys-277 and Cys-286 are disulfide-bonded. 5 LRR repeats span residues 301–322 (TITEIRLEQNTIKVIPPGAFSP), 325–346 (KLRRIDLSNNQISELAPDAFQG), 349–370 (SLNSLVLYGNKITELPKSLFEG), 373–394 (SLQLLLLNANKINCLRVDAFQD), and 397–418 (NLNLLSLYDNKLQTIAKGTFSP). In terms of domain architecture, LRRCT 2 spans 430–480 (NPFICDCHLKWLADYLHTNPIETSGARCTSPRRLANKRIGQIKSKKFRCSA). Cystine bridges form between Cys-434–Cys-457, Cys-436–Cys-478, Cys-506–Cys-512, and Cys-510–Cys-519. The region spanning 497–533 (SGDCFADLACPEKCRCEGTTVDCSNQKLNKIPEHIPQ) is the LRRNT 3 domain. LRR repeat units follow at residues 534-555 (YTAELRLNNNEFTVLEATGIFK), 559-580 (QLRKINFSNNKITDIEEGAFEG), 583-604 (GVNEILLTSNRLENVQHKMFKG), 607-628 (SLKTLMLRSNRITCVGNDSFIG), and 631-652 (SVRLLSLYDNQITTVAPGAFDT). A glycan (N-linked (GlcNAc...) asparagine) is linked at Asn-564. Asn-623 carries N-linked (GlcNAc...) asparagine glycosylation. Residues 664–714 (NPFNCNCYLAWLGEWLRKKRIVTGNPRCQKPYFLKEIPIQDVAIQDFTCDD) form the LRRCT 3 domain. 4 disulfides stabilise this stretch: Cys-668/Cys-691, Cys-670/Cys-712, Cys-727/Cys-733, and Cys-731/Cys-740. The 37-residue stretch at 718–754 (DNSCSPLSRCPTECTCLDTVVRCSNKGLKVLPKGIPR) folds into the LRRNT 4 domain. LRR repeat units lie at residues 755–777 (DVTELYLDGNQFTLVPKELSNYK), 778–799 (HLTLIDLSNNRISTLSNQSFSN), 802–823 (QLLTLILSYNRLRCIPPRTFDG), and 826–847 (SLRLLSLHGNDISVVPEGAFND). Asn-794 and Asn-799 each carry an N-linked (GlcNAc...) asparagine glycan. The 51-residue stretch at 859–909 (NPLYCDCNMQWLSDWVKSEYKEPGIARCAGPGEMADKLLLTTPSKKFTCQG) folds into the LRRCT 4 domain. Intrachain disulfides connect Cys-863/Cys-886, Cys-865/Cys-907, Cys-922/Cys-933, Cys-927/Cys-943, Cys-945/Cys-954, Cys-961/Cys-972, Cys-966/Cys-984, Cys-986/Cys-995, Cys-1002/Cys-1013, Cys-1007/Cys-1022, Cys-1024/Cys-1033, Cys-1040/Cys-1053, Cys-1047/Cys-1062, Cys-1064/Cys-1073, Cys-1080/Cys-1091, Cys-1085/Cys-1100, Cys-1102/Cys-1111, Cys-1125/Cys-1136, Cys-1130/Cys-1145, and Cys-1147/Cys-1156. EGF-like domains follow at residues 918–955 (KCNPCLSNPCKNDGTCNSDPVDFYRCTCPYGFKGQDCD) and 957–996 (PIHACISNPCKHGGTCHLKEGEEDGFWCICADGFEGENCE). The EGF-like 3; calcium-binding domain occupies 998 to 1034 (NVDDCEDNDCENNSTCVDGINNYTCLCPPEYTGELCE). 3 N-linked (GlcNAc...) asparagine glycosylation sites follow: Asn-1009, Asn-1010, and Asn-1019. Positions 1036–1074 (KLDFCAQDLNPCQHDSKCILTPKGFKCDCTPGYVGEHCD) constitute an EGF-like 4 domain. Residues 1076-1112 (DFDDCQDNKCKNGAHCTDAVNGYTCICPEGYSGLFCE) enclose the EGF-like 5; calcium-binding domain. An EGF-like 6 domain is found at 1121 to 1157 (RTSPCDNFDCQNGAQCIVRINEPICQCLPGYQGEKCE). In terms of domain architecture, Laminin G-like spans 1160-1333 (VSVNFINKES…PMQTGILPGC (174 aa)). N-linked (GlcNAc...) asparagine glycosylation is found at Asn-1183, Asn-1266, and Asn-1300. 14 disulfides stabilise this stretch: Cys-1307–Cys-1333, Cys-1336–Cys-1346, Cys-1341–Cys-1356, Cys-1358–Cys-1367, Cys-1375–Cys-1385, Cys-1380–Cys-1395, Cys-1397–Cys-1406, Cys-1416–Cys-1426, Cys-1421–Cys-1436, Cys-1438–Cys-1447, Cys-1453–Cys-1492, Cys-1471–Cys-1506, Cys-1482–Cys-1522, and Cys-1486–Cys-1524. The region spanning 1332 to 1368 (GCEPCHKKVCAHGTCQPSSQAGFTCECQEGWMGPLCD) is the EGF-like 7 domain. The CTCK domain occupies 1453–1528 (CRGERIRDYY…VVKCGCTRCV (76 aa)).

As to quaternary structure, interacts with GREM1. Homodimer. Binds ROBO1 and ROBO2 with high affinity. Fetal lung and kidney, and adult spinal cord. Weak expression in adult adrenal gland, thyroid, trachea and other tissues examined.

It localises to the secreted. Functionally, thought to act as molecular guidance cue in cellular migration, and function appears to be mediated by interaction with roundabout homolog receptors. During neural development involved in axonal navigation at the ventral midline of the neural tube and projection of axons to different regions. SLIT1 and SLIT2 seem to be essential for midline guidance in the forebrain by acting as repulsive signal preventing inappropriate midline crossing by axons projecting from the olfactory bulb. In spinal cord development may play a role in guiding commissural axons once they reached the floor plate by modulating the response to netrin. In vitro, silences the attractive effect of NTN1 but not its growth-stimulatory effect and silencing requires the formation of a ROBO1-DCC complex. May be implicated in spinal cord midline post-crossing axon repulsion. In vitro, only commissural axons that crossed the midline responded to SLIT2. In the developing visual system appears to function as repellent for retinal ganglion axons by providing a repulsion that directs these axons along their appropriate paths prior to, and after passage through, the optic chiasm. In vitro, collapses and repels retinal ganglion cell growth cones. Seems to play a role in branching and arborization of CNS sensory axons, and in neuronal cell migration. In vitro, Slit homolog 2 protein N-product, but not Slit homolog 2 protein C-product, repels olfactory bulb (OB) but not dorsal root ganglia (DRG) axons, induces OB growth cones collapse and induces branching of DRG axons. Seems to be involved in regulating leukocyte migration. This chain is Slit homolog 2 protein (SLIT2), found in Homo sapiens (Human).